We begin with the raw amino-acid sequence, 344 residues long: Holliday junction branch migration complex subunit RuvB (344 aa).

Residues 1–181 form a large ATPase domain (RuvB-L) region; it reads MERIVTPAEM…FGVLCAMEYY (181 aa). Residues L20, R21, G62, K65, T66, T67, 128–130, R171, Y181, and R218 contribute to the ATP site; that span reads EDY. T66 provides a ligand contact to Mg(2+). The small ATPAse domain (RuvB-S) stretch occupies residues 182-252; sequence DENQLKEIVI…EAREALELLE (71 aa). The head domain (RuvB-H) stretch occupies residues 255 to 344; the sequence is NQGFDKVDNK…SNKGQTSFFK (90 aa). DNA contacts are provided by R310 and R315.

Belongs to the RuvB family. As to quaternary structure, homohexamer. Forms an RuvA(8)-RuvB(12)-Holliday junction (HJ) complex. HJ DNA is sandwiched between 2 RuvA tetramers; dsDNA enters through RuvA and exits via RuvB. An RuvB hexamer assembles on each DNA strand where it exits the tetramer. Each RuvB hexamer is contacted by two RuvA subunits (via domain III) on 2 adjacent RuvB subunits; this complex drives branch migration. In the full resolvosome a probable DNA-RuvA(4)-RuvB(12)-RuvC(2) complex forms which resolves the HJ.

The protein resides in the cytoplasm. It carries out the reaction ATP + H2O = ADP + phosphate + H(+). The RuvA-RuvB-RuvC complex processes Holliday junction (HJ) DNA during genetic recombination and DNA repair, while the RuvA-RuvB complex plays an important role in the rescue of blocked DNA replication forks via replication fork reversal (RFR). RuvA specifically binds to HJ cruciform DNA, conferring on it an open structure. The RuvB hexamer acts as an ATP-dependent pump, pulling dsDNA into and through the RuvAB complex. RuvB forms 2 homohexamers on either side of HJ DNA bound by 1 or 2 RuvA tetramers; 4 subunits per hexamer contact DNA at a time. Coordinated motions by a converter formed by DNA-disengaged RuvB subunits stimulates ATP hydrolysis and nucleotide exchange. Immobilization of the converter enables RuvB to convert the ATP-contained energy into a lever motion, pulling 2 nucleotides of DNA out of the RuvA tetramer per ATP hydrolyzed, thus driving DNA branch migration. The RuvB motors rotate together with the DNA substrate, which together with the progressing nucleotide cycle form the mechanistic basis for DNA recombination by continuous HJ branch migration. Branch migration allows RuvC to scan DNA until it finds its consensus sequence, where it cleaves and resolves cruciform DNA. The chain is Holliday junction branch migration complex subunit RuvB from Clostridium botulinum (strain Alaska E43 / Type E3).